We begin with the raw amino-acid sequence, 285 residues long: Transcription factor JAMYB (285 aa).

HTH myb-type domains lie at 26–78 and 79–133; these read SAEL…LNYL and RPDV…QKHA. 2 DNA-binding regions (H-T-H motif) span residues 54-78 and 106-129; these read WNALARAAGLKRTGKSCRLRWLNYL and WSKIAQHLPGRTDNEIKNYWRTRV.

Its subcellular location is the nucleus. Functionally, probable transcription factor that may be involved in the jasmonate-dependent defense responses to the rice blast fungus Magnaporthe oryzae. Does not seem to function in the salicylic acid-dependent signaling pathway. The protein is Transcription factor JAMYB of Oryza sativa subsp. japonica (Rice).